The chain runs to 201 residues: Small ribosomal subunit protein uS4c (201 aa).

Residues 19-38 (PGLTSKSPKAGSDLRNQLRS) are disordered. Positions 89–149 (MRLDNILFRL…DEQKSRALIQ (61 aa)) constitute an S4 RNA-binding domain.

This sequence belongs to the universal ribosomal protein uS4 family. In terms of assembly, part of the 30S ribosomal subunit. Contacts protein S5. The interaction surface between S4 and S5 is involved in control of translational fidelity.

It is found in the plastid. The protein resides in the chloroplast. Its function is as follows. One of the primary rRNA binding proteins, it binds directly to 16S rRNA where it nucleates assembly of the body of the 30S subunit. With S5 and S12 plays an important role in translational accuracy. The chain is Small ribosomal subunit protein uS4c (rps4) from Platanus occidentalis (Sycamore).